The primary structure comprises 108 residues: CRISPR-associated endoribonuclease Cas2 (108 aa).

Mg(2+) is bound at residue D15.

Belongs to the CRISPR-associated endoribonuclease Cas2 protein family. In terms of assembly, homodimer, forms a heterotetramer with a Cas1 homodimer. Mg(2+) serves as cofactor.

Functionally, CRISPR (clustered regularly interspaced short palindromic repeat), is an adaptive immune system that provides protection against mobile genetic elements (viruses, transposable elements and conjugative plasmids). CRISPR clusters contain sequences complementary to antecedent mobile elements and target invading nucleic acids. CRISPR clusters are transcribed and processed into CRISPR RNA (crRNA). Functions as a ssRNA-specific endoribonuclease. Involved in the integration of spacer DNA into the CRISPR cassette. The protein is CRISPR-associated endoribonuclease Cas2 of Paracidovorax avenae (strain ATCC 19860 / DSM 7227 / CCUG 15838 / JCM 20985 / LMG 2117 / NCPPB 1011) (Acidovorax avenae).